A 522-amino-acid chain; its full sequence is Hydroxymethylglutaryl-CoA synthase, cytoplasmic (522 aa).

2 residues coordinate (3S)-3-hydroxy-3-methylglutaryl-CoA: aspartate 43 and alanine 44. The active-site Proton donor/acceptor is glutamate 95. Cysteine 129, asparagine 167, threonine 171, serine 221, histidine 264, lysine 273, asparagine 344, and serine 378 together coordinate (3S)-3-hydroxy-3-methylglutaryl-CoA. Catalysis depends on cysteine 129, which acts as the Acyl-thioester intermediate. Catalysis depends on histidine 264, which acts as the Proton donor/acceptor.

The protein belongs to the thiolase-like superfamily. HMG-CoA synthase family. As to quaternary structure, homodimer.

The protein localises to the cytoplasm. It carries out the reaction acetoacetyl-CoA + acetyl-CoA + H2O = (3S)-3-hydroxy-3-methylglutaryl-CoA + CoA + H(+). It participates in metabolic intermediate biosynthesis; (R)-mevalonate biosynthesis; (R)-mevalonate from acetyl-CoA: step 2/3. Its function is as follows. Catalyzes the condensation of acetyl-CoA with acetoacetyl-CoA to form HMG-CoA, which is converted by HMG-CoA reductase (HMGCR) into mevalonate, a precursor for cholesterol synthesis. The protein is Hydroxymethylglutaryl-CoA synthase, cytoplasmic (HMGCS1) of Gallus gallus (Chicken).